The chain runs to 62 residues: Light-harvesting protein B-870 alpha chain (62 aa).

The residue at position 1 (Met1) is an N-formylmethionine. Residues 1–12 are Cytoplasmic-facing; the sequence is MWRIWQLFDPRQ. The helical transmembrane segment at 13–33 threads the bilayer; that stretch reads ALVGLATFLFVLALLIHFILL. A bacteriochlorophyll is bound at residue His29. The Periplasmic segment spans residues 34–52; the sequence is STERFNWLEGASTKPVQTS. Residues 53–62 constitute a propeptide that is removed on maturation; that stretch reads MVMPSSDLAV.

This sequence belongs to the antenna complex alpha subunit family. The core complex is formed by different alpha and beta chains, binding bacteriochlorophyll molecules, and arranged most probably in tetrameric structures disposed around the reaction center. The non-pigmented gamma chains may constitute additional components.

Its subcellular location is the cell inner membrane. Antenna complexes are light-harvesting systems, which transfer the excitation energy to the reaction centers. The polypeptide is Light-harvesting protein B-870 alpha chain (Rhodospirillum rubrum).